Consider the following 261-residue polypeptide: Indole-3-glycerol phosphate synthase (261 aa).

This sequence belongs to the TrpC family.

It carries out the reaction 1-(2-carboxyphenylamino)-1-deoxy-D-ribulose 5-phosphate + H(+) = (1S,2R)-1-C-(indol-3-yl)glycerol 3-phosphate + CO2 + H2O. It functions in the pathway amino-acid biosynthesis; L-tryptophan biosynthesis; L-tryptophan from chorismate: step 4/5. The sequence is that of Indole-3-glycerol phosphate synthase from Burkholderia pseudomallei (strain 668).